We begin with the raw amino-acid sequence, 518 residues long: MVPTGQVAEKQACEEPRQDRELKSWRCLVFYLCFFGFMAQLRPGESFITPYLLQQNFTIEQVTNEIIPVLPYSHLAVLVPIFLLTDYLRYKPILILQCLSFMCVWLLLLLGTSVVHMQLMEVFYSVTMAARIAYSSYIFSLVRPSRYQRMASYSRAAVLLGVFTSSVLGQVLWPLEQKSQNSNMLNYISLGFIIFSLGLSLFLKRPKHSLFFNRSALVHKALPCELDQMHPGPGRPEPGKLERVLGSCRNSFLVCMLSELVGNLRQPQLRLWCLWWVFNSAGYYLIVYYVHVLWSIDKNLNYNGAVDAASTLLSAITSFSAGFVKIRWALWSKLVIASVIAIQAGLVFCMYMVHYVTWVHKIWVLYMTYVLFRGAYQFLVPIATFQIASSLSKELCALVFGINTFLATALKTAITLVVSDKRGLGLKVEKQFCIYSVYFMVLSVICFVGAVLDGVRYCRRGRHQPLPLPQELSPLENSVQVPSMQDGGLGGLQPSAPQLLPEDGVEDSEASLRAEAKA.

The residue at position 1 (Met1) is an N-acetylmethionine. Residues 1–29 (MVPTGQVAEKQACEEPRQDRELKSWRCLV) lie on the Cytoplasmic side of the membrane. A helical transmembrane segment spans residues 30 to 50 (FYLCFFGFMAQLRPGESFITP). Folate contacts are provided by Ile48 and Thr49. The Extracellular portion of the chain corresponds to 51–62 (YLLQQNFTIEQV). The N-linked (GlcNAc...) asparagine glycan is linked to Asn56. A helical transmembrane segment spans residues 63–85 (TNEIIPVLPYSHLAVLVPIFLLT). Residues 86-89 (DYLR) are Cytoplasmic-facing. A helical transmembrane segment spans residues 90-110 (YKPILILQCLSFMCVWLLLLL). Topologically, residues 111–114 (GTSV) are extracellular. The helical transmembrane segment at 115-137 (VHMQLMEVFYSVTMAARIAYSSY) threads the bilayer. Residues Glu121 and Arg131 each contribute to the folate site. At 138-151 (IFSLVRPSRYQRMA) the chain is on the cytoplasmic side. A helical transmembrane segment spans residues 152 to 176 (SYSRAAVLLGVFTSSVLGQVLWPLE). Val162 serves as a coordination point for folate. The Extracellular segment spans residues 177 to 181 (QKSQN). Residues 182-200 (SNMLNYISLGFIIFSLGLS) form a helical membrane-spanning segment. The Cytoplasmic segment spans residues 201–266 (LFLKRPKHSL…LSELVGNLRQ (66 aa)). Residues 267–292 (PQLRLWCLWWVFNSAGYYLIVYYVHV) form a helical membrane-spanning segment. Folate-binding residues include Ala281, Gly282, and Ile286. Residues 293 to 300 (LWSIDKNL) are Extracellular-facing. Residues 301 to 323 (NYNGAVDAASTLLSAITSFSAGF) form a helical membrane-spanning segment. The Cytoplasmic segment spans residues 324 to 329 (VKIRWA). Residues 330–350 (LWSKLVIASVIAIQAGLVFCM) form a helical membrane-spanning segment. The Extracellular segment spans residues 351–353 (YMV). A helical transmembrane segment spans residues 354 to 377 (HYVTWVHKIWVLYMTYVLFRGAYQ). Residues Tyr366 and Val370 each contribute to the folate site. Over 378-391 (FLVPIATFQIASSL) the chain is Cytoplasmic. Residues 392 to 415 (SKELCALVFGINTFLATALKTAIT) form a helical membrane-spanning segment. The segment at 407 to 419 (ATALKTAITLVVS) is required for substrate-binding. At 416-423 (LVVSDKRG) the chain is on the extracellular side. A helical transmembrane segment spans residues 424 to 448 (LGLKVEKQFCIYSVYFMVLSVICFV). Residues 449–512 (GAVLDGVRYC…DGVEDSEASL (64 aa)) are Cytoplasmic-facing. Phosphoserine is present on residues Ser473, Ser478, and Ser483. The segment at 480-518 (QVPSMQDGGLGGLQPSAPQLLPEDGVEDSEASLRAEAKA) is disordered.

The protein belongs to the reduced folate carrier (RFC) transporter (TC 2.A.48) family.

It localises to the cell membrane. The protein localises to the apical cell membrane. Its subcellular location is the basolateral cell membrane. It catalyses the reaction 5-amino-1-(5-phospho-beta-D-ribosyl)imidazole-4-carboxamide(in) + (6S)-5-methyl-5,6,7,8-tetrahydrofolate(out) = 5-amino-1-(5-phospho-beta-D-ribosyl)imidazole-4-carboxamide(out) + (6S)-5-methyl-5,6,7,8-tetrahydrofolate(in). Antiporter that mediates the import of reduced folates, driven by the export of organic anions. Also acts as an importer of immunoreactive cyclic dinucleotides, but with a lower transporter activity. Mechanistically, acts as a secondary active transporter, which exports intracellular organic anions down their concentration gradients to facilitate the uptake of its substrates. Has high affinity for N5-methyltetrahydrofolate, the predominant circulating form of folate. Also mediates the import of antifolate drug methotrexate. 5-amino-4-imidazolecarboxamide riboside (AICAR), when phosphorylated to AICAR monophosphate, can serve as an organic anion for antiporter activity. The sequence is that of Reduced folate transporter from Cricetulus griseus (Chinese hamster).